We begin with the raw amino-acid sequence, 79 residues long: Large ribosomal subunit protein bL31 (79 aa).

This sequence belongs to the bacterial ribosomal protein bL31 family. Type A subfamily. As to quaternary structure, part of the 50S ribosomal subunit.

Binds the 23S rRNA. The chain is Large ribosomal subunit protein bL31 from Nostoc sp. (strain PCC 7120 / SAG 25.82 / UTEX 2576).